Here is a 212-residue protein sequence, read N- to C-terminus: Acyl-homoserine-lactone synthase (212 aa).

The protein belongs to the autoinducer synthase family.

The catalysed reaction is a fatty acyl-[ACP] + S-adenosyl-L-methionine = an N-acyl-L-homoserine lactone + S-methyl-5'-thioadenosine + holo-[ACP] + H(+). Its function is as follows. Required for the synthesis of OHHL (N-(3-oxohexanoyl)-L-homoserine lactone), an autoinducer molecule which binds to ExpR and thus acts in virulence (soft rot disease) through the activation of genes for plant tissue macerating enzymes. This chain is Acyl-homoserine-lactone synthase (expI), found in Dickeya dadantii (strain 3937) (Erwinia chrysanthemi (strain 3937)).